Here is a 59-residue protein sequence, read N- to C-terminus: MKAFYGILIIFILISMIHLSQQVFINATCTVTSQCRPKCIEAIGQAASKCINRKCKCYP.

Residues 1-22 (MKAFYGILIIFILISMIHLSQQ) form the signal peptide. 3 cysteine pairs are disulfide-bonded: Cys29–Cys50, Cys35–Cys55, and Cys39–Cys57.

This sequence belongs to the short scorpion toxin superfamily. Potassium channel inhibitor family. Alpha-KTx 04 subfamily. Expressed by the venom gland.

Its subcellular location is the secreted. Its function is as follows. Potently blocks Kv1.1/KCNA1 (85%), Kv1.2/KCNA2 (91%), Kv1.3/KCNA3 (89%), Kv1.6/KCNA6 (94%), and Shaker (97%). This chain is Putative potassium channel toxin Ts25, found in Tityus serrulatus (Brazilian scorpion).